We begin with the raw amino-acid sequence, 496 residues long: Glutamyl-tRNA(Gln) amidotransferase subunit B, organellar chromatophore (496 aa).

The protein belongs to the GatB/GatE family. GatB subfamily. Subunit of the heterotrimeric GatCAB amidotransferase (AdT) complex, composed of A, B and C subunits.

It is found in the plastid. The protein resides in the organellar chromatophore. It carries out the reaction L-glutamyl-tRNA(Gln) + L-glutamine + ATP + H2O = L-glutaminyl-tRNA(Gln) + L-glutamate + ADP + phosphate + H(+). Its function is as follows. Allows the formation of correctly charged Gln-tRNA(Gln) through the transamidation of misacylated Glu-tRNA(Gln). The reaction takes place in the presence of glutamine and ATP through an activated gamma-phospho-Glu-tRNA(Gln). This chain is Glutamyl-tRNA(Gln) amidotransferase subunit B, organellar chromatophore, found in Paulinella chromatophora.